A 422-amino-acid chain; its full sequence is Leucine-rich repeat protein 1 (422 aa).

LRR repeat units follow at residues 184–207 (LKNL…IGDL), 209–230 (HLQE…LCTS), 233–258 (QKSL…QFRE), 260–279 (TNLN…IGQL), 280–301 (TNLR…EFKM), and 304–327 (LEYL…KLQV).

As to quaternary structure, component of the probable ECS(LRR1) E3 ubiquitin-protein ligase complex which contains CUL2, RBX1, Elongin BC complex and LRR1. Interacts with CUL2, RBX1, ELOB and ELOC.

It localises to the nucleus. The protein operates within protein modification; protein ubiquitination. Its function is as follows. Substrate recognition subunit of an ECS (Elongin BC-CUL2/5-SOCS-box protein) E3 ubiquitin-protein ligase complex which mediates the ubiquitination and subsequent proteasomal degradation of target proteins. ECS(LRR1) ubiquitinates MCM7 and promotes CMG replisome disassembly by VCP and chromatin extraction during S-phase. May negatively regulate the 4-1BB-mediated signaling cascades which result in the activation of NK-kappaB and JNK1. The sequence is that of Leucine-rich repeat protein 1 from Mus musculus (Mouse).